Reading from the N-terminus, the 1215-residue chain is Zinc finger SWIM domain-containing protein 6 (1215 aa).

Disordered regions lie at residues 1 to 46 (MAER…RPGP) and 133 to 161 (AAGGPGDDSGGGGGAGGGGGGGSSSSPAA). Composition is skewed to gly residues over residues 18 to 38 (PGGGGGGGGSSGGGGGAGGGY) and 133 to 155 (AAGGPGDDSGGGGGAGGGGGGGS). The SWIM-type zinc finger occupies 246 to 283 (CNVAISFDRCKITSVTCSCGNKDIFYCAHVVALSLYRI).

Involved in nervous system development, important for striatal morphology and motor regulation. The sequence is that of Zinc finger SWIM domain-containing protein 6 from Homo sapiens (Human).